A 102-amino-acid chain; its full sequence is Large ribosomal subunit protein bL21 (102 aa).

The protein belongs to the bacterial ribosomal protein bL21 family. As to quaternary structure, part of the 50S ribosomal subunit. Contacts protein L20.

In terms of biological role, this protein binds to 23S rRNA in the presence of protein L20. The polypeptide is Large ribosomal subunit protein bL21 (Bacillus anthracis (strain A0248)).